The chain runs to 209 residues: Small ribosomal subunit protein uS4 (209 aa).

The S4 RNA-binding domain maps to threonine 98–leucine 161.

Belongs to the universal ribosomal protein uS4 family. As to quaternary structure, part of the 30S ribosomal subunit. Contacts protein S5. The interaction surface between S4 and S5 is involved in control of translational fidelity.

Functionally, one of the primary rRNA binding proteins, it binds directly to 16S rRNA where it nucleates assembly of the body of the 30S subunit. With S5 and S12 plays an important role in translational accuracy. This Stenotrophomonas maltophilia (strain R551-3) protein is Small ribosomal subunit protein uS4.